The primary structure comprises 98 residues: Large ribosomal subunit protein bL27 (98 aa).

Positions 1 to 10 (MELKMNLQLF) are excised as a propeptide. Residues 11-30 (AQKKGTGSSKNGRDSISKRL) form a disordered region.

It belongs to the bacterial ribosomal protein bL27 family. The N-terminus is cleaved by ribosomal processing cysteine protease Prp.

The chain is Large ribosomal subunit protein bL27 from Natranaerobius thermophilus (strain ATCC BAA-1301 / DSM 18059 / JW/NM-WN-LF).